The sequence spans 630 residues: Elongation factor 4 (630 aa).

The segment at 1–22 (MTVARNRAGAGPGKGSPISSFA) is disordered. The tr-type G domain maps to 30 to 211 (ARIRNFCIIA…EVVRQVPAPV (182 aa)). Residues 42–47 (DHGKST) and 158–161 (NKID) each bind GTP.

Belongs to the TRAFAC class translation factor GTPase superfamily. Classic translation factor GTPase family. LepA subfamily.

Its subcellular location is the cell membrane. It catalyses the reaction GTP + H2O = GDP + phosphate + H(+). Required for accurate and efficient protein synthesis under certain stress conditions. May act as a fidelity factor of the translation reaction, by catalyzing a one-codon backward translocation of tRNAs on improperly translocated ribosomes. Back-translocation proceeds from a post-translocation (POST) complex to a pre-translocation (PRE) complex, thus giving elongation factor G a second chance to translocate the tRNAs correctly. Binds to ribosomes in a GTP-dependent manner. The polypeptide is Elongation factor 4 (Rhodococcus jostii (strain RHA1)).